The chain runs to 762 residues: 1-phosphatidylinositol 4,5-bisphosphate phosphodiesterase delta-4 (762 aa).

The region spanning 16-124 (LLMQEGMPMR…WMRGLQLLVD (109 aa)) is the PH domain. The tract at residues 26 to 53 (KVRSKSWKKLRYFRLQNDGMTVWHARQA) is substrate binding. EF-hand domains are found at residues 134–169 (RLDQWLSDWFQRGDKNQDGKMSFQEVQRLLHLMNVE), 170–205 (MDQEYAFSLFQAADTSQSGTLEGEEFVQFYKALTKR), and 206–237 (AEVQELFESFSADGQKLTLLEFLDFLQEEQKE). Ca(2+) contacts are provided by Asp-147, Asn-149, Asp-151, Lys-153, Glu-158, Asp-183, Ser-185, Ser-187, Thr-189, and Glu-194. A GBA motif is present at residues 213 to 243 (ESFSADGQKLTLLEFLDFLQEEQKERDCTSE). The PI-PLC X-box domain occupies 290–435 (QDMTQPLNHY…LRRKILVKGK (146 aa)). Residue His-305 is part of the active site. Positions 306, 335, and 337 each coordinate Ca(2+). Residue His-350 is part of the active site. Residue Glu-384 participates in Ca(2+) binding. Substrate contacts are provided by Lys-433 and Lys-435. Acidic residues predominate over residues 443–471 (LEYEEEEAEPELEESELALESQFETEPEP). Residues 443 to 483 (LEYEEEEAEPELEESELALESQFETEPEPQEQNLQNKDKKK) are disordered. Ser-457 is subject to Phosphoserine. Positions 493-609 (LSSLVIYLKS…GYVLKPDFLR (117 aa)) constitute a PI-PLC Y-box domain. Residues Ser-522 and Arg-549 each contribute to the substrate site. In terms of domain architecture, C2 spans 609–736 (RDIQSSFHPE…QGYRHIHLLS (128 aa)). 6 residues coordinate Ca(2+): Ile-650, Asp-652, Asn-676, Asp-705, Tyr-706, and Asp-707. The PDZ-binding motif lies at 731-734 (HIHL).

In terms of assembly, interacts with GRIP1. Interacts (via GBA motif) with guanine nucleotide-binding protein G(i) alpha subunit GNAI3 (inactive GDP-bound form); high-affinity interaction. As to quaternary structure, interacts (via GBA motif) with guanine nucleotide-binding protein G(i) alpha subunit GNAI3 (inactive GDP-bound form); low-affinity interaction. Requires Ca(2+) as cofactor. In terms of tissue distribution, highly expressed in skeletal muscle and kidney tissues, and at moderate level in intestinal tissue. Expressed in corneal epithelial cells.

It localises to the membrane. Its subcellular location is the nucleus. The protein localises to the cytoplasm. The protein resides in the endoplasmic reticulum. It catalyses the reaction a 1,2-diacyl-sn-glycero-3-phospho-(1D-myo-inositol-4,5-bisphosphate) + H2O = 1D-myo-inositol 1,4,5-trisphosphate + a 1,2-diacyl-sn-glycerol + H(+). It carries out the reaction a 1,2-diacyl-sn-glycero-3-phospho-(1D-myo-inositol) + H2O = 1D-myo-inositol 1-phosphate + a 1,2-diacyl-sn-glycerol + H(+). Hydrolyzes the phosphatidylinositol 4,5-bisphosphate (PIP2) to generate 2 second messenger molecules diacylglycerol (DAG) and inositol 1,4,5-trisphosphate (IP3). DAG mediates the activation of protein kinase C (PKC), while IP3 releases Ca(2+) from intracellular stores. Required for acrosome reaction in sperm during fertilization, probably by acting as an important enzyme for intracellular Ca(2+) mobilization in the zona pellucida-induced acrosome reaction. May play a role in cell growth. Modulates the liver regeneration in cooperation with nuclear PKC. Overexpression up-regulates the Erk signaling pathway and proliferation. In terms of biological role, acts as a non-receptor guanine nucleotide exchange factor which binds to and activates guanine nucleotide-binding protein (G-protein) alpha subunit GNAI3. The protein is 1-phosphatidylinositol 4,5-bisphosphate phosphodiesterase delta-4 of Homo sapiens (Human).